The sequence spans 357 residues: UDP-N-acetylglucosamine--N-acetylmuramyl-(pentapeptide) pyrophosphoryl-undecaprenol N-acetylglucosamine transferase (357 aa).

Residues 13–15, arginine 166, serine 196, and glutamine 291 contribute to the UDP-N-acetyl-alpha-D-glucosamine site; that span reads SAG.

Belongs to the glycosyltransferase 28 family. MurG subfamily.

It localises to the cell membrane. It catalyses the reaction di-trans,octa-cis-undecaprenyl diphospho-N-acetyl-alpha-D-muramoyl-L-alanyl-D-glutamyl-meso-2,6-diaminopimeloyl-D-alanyl-D-alanine + UDP-N-acetyl-alpha-D-glucosamine = di-trans,octa-cis-undecaprenyl diphospho-[N-acetyl-alpha-D-glucosaminyl-(1-&gt;4)]-N-acetyl-alpha-D-muramoyl-L-alanyl-D-glutamyl-meso-2,6-diaminopimeloyl-D-alanyl-D-alanine + UDP + H(+). The protein operates within cell wall biogenesis; peptidoglycan biosynthesis. In terms of biological role, cell wall formation. Catalyzes the transfer of a GlcNAc subunit on undecaprenyl-pyrophosphoryl-MurNAc-pentapeptide (lipid intermediate I) to form undecaprenyl-pyrophosphoryl-MurNAc-(pentapeptide)GlcNAc (lipid intermediate II). This is UDP-N-acetylglucosamine--N-acetylmuramyl-(pentapeptide) pyrophosphoryl-undecaprenol N-acetylglucosamine transferase from Clostridium perfringens (strain ATCC 13124 / DSM 756 / JCM 1290 / NCIMB 6125 / NCTC 8237 / Type A).